Here is a 182-residue protein sequence, read N- to C-terminus: Inner membrane-spanning protein YciB (182 aa).

5 helical membrane passes run 22-42, 53-73, 76-96, 121-141, and 149-169; these read IYAA…VVWV, ITLV…NEAF, WKVT…QFLF, FSWG…AFYL, and FKVF…GIYI.

Belongs to the YciB family.

It is found in the cell inner membrane. In terms of biological role, plays a role in cell envelope biogenesis, maintenance of cell envelope integrity and membrane homeostasis. This chain is Inner membrane-spanning protein YciB, found in Tolumonas auensis (strain DSM 9187 / NBRC 110442 / TA 4).